The sequence spans 179 residues: Large ribosomal subunit protein uL6 (179 aa).

The protein belongs to the universal ribosomal protein uL6 family. As to quaternary structure, part of the 50S ribosomal subunit.

This protein binds to the 23S rRNA, and is important in its secondary structure. It is located near the subunit interface in the base of the L7/L12 stalk, and near the tRNA binding site of the peptidyltransferase center. The chain is Large ribosomal subunit protein uL6 from Chloroherpeton thalassium (strain ATCC 35110 / GB-78).